The following is a 321-amino-acid chain: Biotin synthase (321 aa).

The region spanning 44 to 273 (FCGNVFDLCT…DGFVRIAAGR (230 aa)) is the Radical SAM core domain. 3 residues coordinate [4Fe-4S] cluster: Cys62, Cys66, and Cys69. The [2Fe-2S] cluster site is built by Ser106, Cys138, Cys198, and Arg268.

It belongs to the radical SAM superfamily. Biotin synthase family. In terms of assembly, homodimer. The cofactor is [4Fe-4S] cluster. It depends on [2Fe-2S] cluster as a cofactor.

The catalysed reaction is (4R,5S)-dethiobiotin + (sulfur carrier)-SH + 2 reduced [2Fe-2S]-[ferredoxin] + 2 S-adenosyl-L-methionine = (sulfur carrier)-H + biotin + 2 5'-deoxyadenosine + 2 L-methionine + 2 oxidized [2Fe-2S]-[ferredoxin]. Its pathway is cofactor biosynthesis; biotin biosynthesis; biotin from 7,8-diaminononanoate: step 2/2. Its function is as follows. Catalyzes the conversion of dethiobiotin (DTB) to biotin by the insertion of a sulfur atom into dethiobiotin via a radical-based mechanism. The polypeptide is Biotin synthase (Akkermansia muciniphila (strain ATCC BAA-835 / DSM 22959 / JCM 33894 / BCRC 81048 / CCUG 64013 / CIP 107961 / Muc)).